We begin with the raw amino-acid sequence, 385 residues long: 8-amino-7-oxononanoate synthase (385 aa).

A substrate-binding site is contributed by Arg-27. 105–106 (GY) contacts pyridoxal 5'-phosphate. Substrate is bound at residue His-130. Pyridoxal 5'-phosphate-binding positions include Ser-176, 201-204 (DEAH), and 232-235 (TMSK). Lys-235 carries the post-translational modification N6-(pyridoxal phosphate)lysine. Residue Thr-345 participates in substrate binding.

The protein belongs to the class-II pyridoxal-phosphate-dependent aminotransferase family. BioF subfamily. In terms of assembly, homodimer. Pyridoxal 5'-phosphate is required as a cofactor.

The catalysed reaction is 6-carboxyhexanoyl-[ACP] + L-alanine + H(+) = (8S)-8-amino-7-oxononanoate + holo-[ACP] + CO2. It participates in cofactor biosynthesis; biotin biosynthesis. Its function is as follows. Catalyzes the decarboxylative condensation of pimeloyl-[acyl-carrier protein] and L-alanine to produce 8-amino-7-oxononanoate (AON), [acyl-carrier protein], and carbon dioxide. The sequence is that of 8-amino-7-oxononanoate synthase from Mycobacterium leprae (strain Br4923).